Consider the following 465-residue polypeptide: ATP synthase subunit beta (465 aa).

149–156 (GGAGVGKT) provides a ligand contact to ATP.

It belongs to the ATPase alpha/beta chains family. In terms of assembly, F-type ATPases have 2 components, CF(1) - the catalytic core - and CF(0) - the membrane proton channel. CF(1) has five subunits: alpha(3), beta(3), gamma(1), delta(1), epsilon(1). CF(0) has three main subunits: a(1), b(2) and c(9-12). The alpha and beta chains form an alternating ring which encloses part of the gamma chain. CF(1) is attached to CF(0) by a central stalk formed by the gamma and epsilon chains, while a peripheral stalk is formed by the delta and b chains.

Its subcellular location is the cell inner membrane. The enzyme catalyses ATP + H2O + 4 H(+)(in) = ADP + phosphate + 5 H(+)(out). Produces ATP from ADP in the presence of a proton gradient across the membrane. The catalytic sites are hosted primarily by the beta subunits. In Dictyoglomus turgidum (strain DSM 6724 / Z-1310), this protein is ATP synthase subunit beta.